Reading from the N-terminus, the 502-residue chain is MQSLARLSRTSLVQKGLVPQTIKNYSSVSQAEIDNEPRFLECFKTFFDKAAGLTNLKPGVLNNMKECNVALRVEFPIKNEHGDVDIIAGYRAQHSHHRLPCKGGIRFSEEVDLQEVMALASLMTYKCAVVDVPFGGAKGGVRIDPKKYTVAQREKITRAYTLLLCQKNFIGPGVDVPAPDMGTGEQEMAWIRDTYQAFNTNDVDSMACVTGKPISSGGIRGRTEATGLGVFYGIREFLSYEEVLKKTGLTPGIKGKSIVIQGFGNVGYFAAKFFEQAGAKVIAVAEHNGAVYNADGLNIDALNKYKLQHGTFIDFPGATNIVDSVKALEIPCDILIPAALEKQIHIGNVADIQAKLIGEAANGPMTPRADQILLNRGHVIIPDLLLNAGGVTVSYFEWLKNLSHVRFGRLNKKWEESSKKLLLEFVESTVNKKLSEAERSLIIHGADEIDIVRSGLEDTMQNACAETRKTANEKNTDYRSAALYNAIMKIKAVYESSGNVFS.

96–98 (HHR) contacts NAD(+). Substrate contacts are provided by Lys102 and Lys126. An NAD(+)-binding site is contributed by Asp131. Residue Lys138 is part of the active site. Residue Ser394 participates in substrate binding.

The protein belongs to the Glu/Leu/Phe/Val dehydrogenases family. In terms of assembly, homohexamer.

It is found in the mitochondrion matrix. The catalysed reaction is L-glutamate + NAD(+) + H2O = 2-oxoglutarate + NH4(+) + NADH + H(+). It catalyses the reaction L-glutamate + NADP(+) + H2O = 2-oxoglutarate + NH4(+) + NADPH + H(+). With respect to regulation, subject to allosteric regulation. Activated by AMP and ADP. The polypeptide is Glutamate dehydrogenase, mitochondrial (gluD) (Dictyostelium discoideum (Social amoeba)).